Consider the following 464-residue polypeptide: Cysteine--tRNA ligase (464 aa).

Cys32 is a Zn(2+) binding site. The 'HIGH' region motif lies at 34–44 (VTVYDDCHIGH). Zn(2+) contacts are provided by Cys213, His238, and Glu242. The 'KMSKS' region signature appears at 270–274 (KMSKS). Lys273 provides a ligand contact to ATP.

This sequence belongs to the class-I aminoacyl-tRNA synthetase family. In terms of assembly, monomer. The cofactor is Zn(2+).

It localises to the cytoplasm. The enzyme catalyses tRNA(Cys) + L-cysteine + ATP = L-cysteinyl-tRNA(Cys) + AMP + diphosphate. In Francisella tularensis subsp. tularensis (strain SCHU S4 / Schu 4), this protein is Cysteine--tRNA ligase.